A 103-amino-acid polypeptide reads, in one-letter code: Large ribosomal subunit protein bL32m (103 aa).

A mitochondrion-targeting transit peptide spans Met1 to Leu47. Zn(2+)-binding residues include Cys77, Cys80, Cys90, and Cys93.

The protein belongs to the bacterial ribosomal protein bL32 family. In terms of assembly, component of the mitochondrial large ribosomal subunit (mt-LSU). Mature yeast 74S mitochondrial ribosomes consist of a small (37S) and a large (54S) subunit. The 37S small subunit contains a 15S ribosomal RNA (15S mt-rRNA) and at least 32 different proteins. The 54S large subunit contains a 21S rRNA (21S mt-rRNA) and at least 45 different proteins. bL32m has a zinc binding site. Post-translationally, MRPL32 precursor is processed by the m-AAA protease, which cleaves the N-terminal transit peptide. Cleavage by the m-AAA protease takes place prior to assembly into the large subunit, an essential step for mitochondrial ribosome (mitoribosome) assembly. Proper processing by the m-AAA protease is dependent on the zinc-binding region within the tightly folded C-terminal domain of MRPL32: zinc-dependent folding halts degradation initiated from the N-terminus and triggers the release of mature mrpl32.

It localises to the mitochondrion. Functionally, component of the mitochondrial ribosome (mitoribosome), a dedicated translation machinery responsible for the synthesis of mitochondrial genome-encoded proteins, including at least some of the essential transmembrane subunits of the mitochondrial respiratory chain. The mitoribosomes are attached to the mitochondrial inner membrane and translation products are cotranslationally integrated into the membrane. This chain is Large ribosomal subunit protein bL32m (mrpl32), found in Schizosaccharomyces pombe (strain 972 / ATCC 24843) (Fission yeast).